Here is a 479-residue protein sequence, read N- to C-terminus: Chromosomal replication initiator protein DnaA (479 aa).

Positions 1–74 (MFSGVVMAWQ…RSLTGVDSSI (74 aa)) are domain I, interacts with DnaA modulators. A domain II region spans residues 74-142 (ITDVRFLEKK…SVPKNNASIR (69 aa)). A domain III, AAA+ region region spans residues 143–360 (ALHPRYTFDE…SAITAIGARA (218 aa)). Residues Gly187, Gly189, Lys190, and Ser191 each contribute to the ATP site. Residues 361–479 (RLMGGYIDMN…NLLSDKVKQI (119 aa)) are domain IV, binds dsDNA.

The protein belongs to the DnaA family. Oligomerizes as a right-handed, spiral filament on DNA at oriC.

It localises to the cytoplasm. In terms of biological role, plays an essential role in the initiation and regulation of chromosomal replication. ATP-DnaA binds to the origin of replication (oriC) to initiate formation of the DNA replication initiation complex once per cell cycle. Binds the DnaA box (a 9 base pair repeat at the origin) and separates the double-stranded (ds)DNA. Forms a right-handed helical filament on oriC DNA; dsDNA binds to the exterior of the filament while single-stranded (ss)DNA is stabiized in the filament's interior. The ATP-DnaA-oriC complex binds and stabilizes one strand of the AT-rich DNA unwinding element (DUE), permitting loading of DNA polymerase. After initiation quickly degrades to an ADP-DnaA complex that is not apt for DNA replication. Binds acidic phospholipids. This Desulfotalea psychrophila (strain LSv54 / DSM 12343) protein is Chromosomal replication initiator protein DnaA.